The chain runs to 491 residues: MKILFATSEAHPLIKTGGLADVSGSLPDAYHHLKQKVRMVMPAYGDIWEKVSGVKQLSELSIAACGRQLHVRIHVASAEGIDVPIWLVDIPELFHRPGNPYLALDGKDWWDNGERFAVFSKVVAEIAMNRAGLKWQPDLVQTNDWQTGLVSALLTLEAERPKTVFTIHNMAYAGLFPKSLFEGLGLPWSWWEPHDGIEFYDNMSMLKAGIQMADWVTTVSPTYAKEITFPEYAYGLEGVLIKRLDEGRLVGILNGIDHDVWNPKTDPFIRYHYSVDKGRVAAKKRNKKDMLDFWDLPKAVVDADDPVIGLVGRLVPQKGIDLVLEVLPELIEQTNVRFVIVGTGDSLFEYQLTELAHQYPERLMIYIGYSESLAHKVEAGADLFLMPSRFEPCGLNQLYSLAYGTPPIVHSTGGLSDTVVNATKENLATGQATGFVFYDPSRHALKSTILHALHLFSKKGTWQKLQKNGMRQDFSWTRSAKQYLALFKAMV.

Lys-15 contacts ADP-alpha-D-glucose.

This sequence belongs to the glycosyltransferase 1 family. Bacterial/plant glycogen synthase subfamily.

The catalysed reaction is [(1-&gt;4)-alpha-D-glucosyl](n) + ADP-alpha-D-glucose = [(1-&gt;4)-alpha-D-glucosyl](n+1) + ADP + H(+). The protein operates within glycan biosynthesis; glycogen biosynthesis. Functionally, synthesizes alpha-1,4-glucan chains using ADP-glucose. The polypeptide is Glycogen synthase (Hydrogenovibrio crunogenus (strain DSM 25203 / XCL-2) (Thiomicrospira crunogena)).